The sequence spans 317 residues: Acetyl-coenzyme A carboxylase carboxyl transferase subunit beta (317 aa).

Positions 1-28 (MANNMTDTMTKPDINNDSTSLQQNGNKA) are disordered. The CoA carboxyltransferase N-terminal domain maps to 55 to 317 (PSTKCSSCHS…LCSVPNVDVQ (263 aa)). Zn(2+) is bound by residues Cys-59, Cys-62, Cys-78, and Cys-81. Residues 59 to 81 (CSSCHSIITNTALIFNCYVCPHC) form a C4-type zinc finger.

It belongs to the AccD/PCCB family. As to quaternary structure, acetyl-CoA carboxylase is a heterohexamer composed of biotin carboxyl carrier protein (AccB), biotin carboxylase (AccC) and two subunits each of ACCase subunit alpha (AccA) and ACCase subunit beta (AccD). It depends on Zn(2+) as a cofactor.

It is found in the cytoplasm. It catalyses the reaction N(6)-carboxybiotinyl-L-lysyl-[protein] + acetyl-CoA = N(6)-biotinyl-L-lysyl-[protein] + malonyl-CoA. It participates in lipid metabolism; malonyl-CoA biosynthesis; malonyl-CoA from acetyl-CoA: step 1/1. Functionally, component of the acetyl coenzyme A carboxylase (ACC) complex. Biotin carboxylase (BC) catalyzes the carboxylation of biotin on its carrier protein (BCCP) and then the CO(2) group is transferred by the transcarboxylase to acetyl-CoA to form malonyl-CoA. The protein is Acetyl-coenzyme A carboxylase carboxyl transferase subunit beta of Psychrobacter cryohalolentis (strain ATCC BAA-1226 / DSM 17306 / VKM B-2378 / K5).